A 352-amino-acid polypeptide reads, in one-letter code: Tropomodulin-3 (352 aa).

Serine 25 carries the post-translational modification Phosphoserine.

It belongs to the tropomodulin family. In terms of assembly, binds to the N-terminus of tropomyosin and to actin. Interacts with FLII. Ubiquitous.

Its subcellular location is the cytoplasm. It localises to the cytoskeleton. Blocks the elongation and depolymerization of the actin filaments at the pointed end. The Tmod/TM complex contributes to the formation of the short actin protofilament, which in turn defines the geometry of the membrane skeleton. The polypeptide is Tropomodulin-3 (TMOD3) (Homo sapiens (Human)).